The chain runs to 61 residues: Large ribosomal subunit protein uL30 (61 aa).

The protein belongs to the universal ribosomal protein uL30 family. As to quaternary structure, part of the 50S ribosomal subunit.

The chain is Large ribosomal subunit protein uL30 from Chlorobium luteolum (strain DSM 273 / BCRC 81028 / 2530) (Pelodictyon luteolum).